The chain runs to 199 residues: NADH-quinone oxidoreductase subunit C (199 aa).

Belongs to the complex I 30 kDa subunit family. NDH-1 is composed of 14 different subunits. Subunits NuoB, C, D, E, F, and G constitute the peripheral sector of the complex.

The protein localises to the cell membrane. The enzyme catalyses a quinone + NADH + 5 H(+)(in) = a quinol + NAD(+) + 4 H(+)(out). Functionally, NDH-1 shuttles electrons from NADH, via FMN and iron-sulfur (Fe-S) centers, to quinones in the respiratory chain. The immediate electron acceptor for the enzyme in this species is believed to be ubiquinone. Couples the redox reaction to proton translocation (for every two electrons transferred, four hydrogen ions are translocated across the cytoplasmic membrane), and thus conserves the redox energy in a proton gradient. The sequence is that of NADH-quinone oxidoreductase subunit C from Polynucleobacter asymbioticus (strain DSM 18221 / CIP 109841 / QLW-P1DMWA-1) (Polynucleobacter necessarius subsp. asymbioticus).